The sequence spans 580 residues: PTS system fructose-specific EIIB'BC component (580 aa).

PTS EIIB type-2 domains are found at residues 1–99 (MSSS…QLAA) and 120–215 (IVAI…KALA). Residue Cys126 is the Phosphocysteine intermediate; for EIIB activity of the active site. A Phosphocysteine; by EIIA modification is found at Cys126. Positions 243–580 (AYKHLMTGVS…LKKPVADVIA (338 aa)) constitute a PTS EIIC type-2 domain. The next 9 helical transmembrane spans lie at 254–274 (MLPFVTAGGLLIALAFALGGI), 289–309 (LFQIGAKAGFTLMVPALAGYI), 332–352 (LNAGFLGGIIAGFIAGYGVAA), 369–389 (VLILPVLGTLLVGLAMMYVFG), 410–430 (SALLLGLLLGGMMAFDMGGPV), 451–471 (AAAMVAGMTPPLGIALATWVF), 483–503 (ATAAGVLGLAFVTEGAIPYAA), 509–529 (TIPALVIGSAVAGAISMTAGA), and 549–571 (HLLNYVLALVVGVVVTAVALRLL).

The protein localises to the cell inner membrane. The enzyme catalyses D-fructose(out) + N(pros)-phospho-L-histidyl-[protein] = D-fructose 1-phosphate(in) + L-histidyl-[protein]. Its function is as follows. The phosphoenolpyruvate-dependent sugar phosphotransferase system (sugar PTS), a major carbohydrate active transport system, catalyzes the phosphorylation of incoming sugar substrates concomitantly with their translocation across the cell membrane. The enzyme II FruAB PTS system is involved in fructose transport. This Xanthomonas campestris pv. campestris (strain ATCC 33913 / DSM 3586 / NCPPB 528 / LMG 568 / P 25) protein is PTS system fructose-specific EIIB'BC component.